Reading from the N-terminus, the 286-residue chain is L-ribulose 3-epimerase (286 aa).

Positions 12, 69, 152, and 158 each coordinate D-allulose. D-fructose contacts are provided by histidine 12, serine 69, glutamate 152, and glutamate 158. The Proton donor/acceptor role is filled by glutamate 152. A Mn(2+)-binding site is contributed by glutamate 152. Aspartate 185 provides a ligand contact to Mn(2+). Histidine 188, histidine 211, arginine 217, and glutamate 246 together coordinate D-allulose. Positions 188, 211, 217, and 246 each coordinate D-fructose. Histidine 211 is a binding site for Mn(2+). The active-site Proton donor/acceptor is the glutamate 246. Mn(2+) is bound at residue glutamate 246.

The protein belongs to the hyi family. As to quaternary structure, homodimer. Mn(2+) serves as cofactor.

It catalyses the reaction L-ribulose = L-xylulose. It carries out the reaction D-ribulose = D-xylulose. The enzyme catalyses D-allulose = keto-D-fructose. The catalysed reaction is keto-L-tagatose = keto-L-sorbose. It catalyses the reaction keto-D-tagatose = keto-D-sorbose. Its function is as follows. Catalyzes the epimerization of various ketoses at the C(3) position. Exhibits the highest enzymatic activity toward L-ribulose, followed by D-ribulose, D-allulose and D-fructose. Shows lower activity with L-xylulose, L-tagatose, D-xylulose, D-tagatose, L-sorbose, D-sorbose, and weak activity with L-allulose and L-fructose. The polypeptide is L-ribulose 3-epimerase (Methylomonas sp. (strain DH-1)).